Reading from the N-terminus, the 192-residue chain is NADH-quinone oxidoreductase subunit B 1 (192 aa).

Positions 71, 72, 136, and 166 each coordinate [4Fe-4S] cluster.

The protein belongs to the complex I 20 kDa subunit family. As to quaternary structure, NDH-1 is composed of 14 different subunits. Subunits NuoB, C, D, E, F, and G constitute the peripheral sector of the complex. The cofactor is [4Fe-4S] cluster.

The protein resides in the cell inner membrane. It catalyses the reaction a quinone + NADH + 5 H(+)(in) = a quinol + NAD(+) + 4 H(+)(out). NDH-1 shuttles electrons from NADH, via FMN and iron-sulfur (Fe-S) centers, to quinones in the respiratory chain. The immediate electron acceptor for the enzyme in this species is believed to be ubiquinone. Couples the redox reaction to proton translocation (for every two electrons transferred, four hydrogen ions are translocated across the cytoplasmic membrane), and thus conserves the redox energy in a proton gradient. This chain is NADH-quinone oxidoreductase subunit B 1, found in Rhizobium meliloti (strain 1021) (Ensifer meliloti).